The following is a 57-amino-acid chain: UPF0391 membrane protein RPB_2510 (57 aa).

2 helical membrane-spanning segments follow: residues 6 to 26 and 35 to 55; these read WALI…TGIS and ILFY…FTIF.

This sequence belongs to the UPF0391 family.

Its subcellular location is the cell membrane. The chain is UPF0391 membrane protein RPB_2510 from Rhodopseudomonas palustris (strain HaA2).